The following is a 236-amino-acid chain: Auxin-responsive protein IAA16 (236 aa).

The EAR-like (transcriptional repression) motif lies at 9-13; that stretch reads LRLGL. The segment at 82-110 is disordered; that stretch reads KNVMSGQKPTTGDATEGNDKTSGSSGATS. The span at 85 to 94 shows a compositional bias: polar residues; it reads MSGQKPTTGD. A PB1 domain is found at 118–218; sequence VAYVKVSMDG…SCKRIRIMKG (101 aa).

It belongs to the Aux/IAA family. Homodimers and heterodimers.

The protein resides in the nucleus. Aux/IAA proteins are short-lived transcriptional factors that function as repressors of early auxin response genes at low auxin concentrations. Repression is thought to result from the interaction with auxin response factors (ARFs), proteins that bind to the auxin-responsive promoter element (AuxRE). Formation of heterodimers with ARF proteins may alter their ability to modulate early auxin response genes expression. The protein is Auxin-responsive protein IAA16 (IAA16) of Arabidopsis thaliana (Mouse-ear cress).